We begin with the raw amino-acid sequence, 223 residues long: Putative C-type lectin protein 51 (223 aa).

An N-terminal signal peptide occupies residues 1-31; that stretch reads MAKRINFTSCLIFTSCFTAFIVSLCLLVSSC. In terms of domain architecture, C-type lectin spans 111–218; it reads QEGRCYHYSR…CDTPRRCLCG (108 aa). Cys-193 and Cys-209 form a disulfide bridge.

This Equine herpesvirus 2 (strain 86/87) (EHV-2) protein is Putative C-type lectin protein 51 (51).